Here is a 166-residue protein sequence, read N- to C-terminus: Plastocyanin, chloroplastic (166 aa).

Residues 1–67 (MASLTSAAVT…GAVLASNALA (67 aa)) constitute a chloroplast transit peptide. A Plastocyanin-like domain is found at 68–166 (VEVLLGGSDG…AGMAGKITVN (99 aa)). Cu cation is bound by residues histidine 104, cysteine 151, histidine 154, and methionine 159.

The protein belongs to the plastocyanin family. Cu(2+) is required as a cofactor.

It localises to the plastid. It is found in the chloroplast thylakoid membrane. Functionally, participates in electron transfer between P700 and the cytochrome b6-f complex in photosystem I. The protein is Plastocyanin, chloroplastic (PETE) of Fritillaria agrestis (Stinkbells).